The primary structure comprises 223 residues: Capsid protein (223 aa).

Basic and acidic residues predominate over residues 1-19 (MDDETKKLKNKNKETKEGD). Residues 1 to 21 (MDDETKKLKNKNKETKEGDDV) are disordered.

Belongs to the closteroviridae capsid protein family. Post-translationally, consists of at least two size variants, CP1 and CP2, which result of post-translational proteolysis at sites approximately 12 to 15 and 26 AA from the N-terminus respectively.

The protein resides in the virion. This chain is Capsid protein, found in Citrus tristeza virus (isolate T36) (CTV).